Reading from the N-terminus, the 117-residue chain is Large ribosomal subunit protein bL20 (117 aa).

Belongs to the bacterial ribosomal protein bL20 family.

Its function is as follows. Binds directly to 23S ribosomal RNA and is necessary for the in vitro assembly process of the 50S ribosomal subunit. It is not involved in the protein synthesizing functions of that subunit. In Symbiobacterium thermophilum (strain DSM 24528 / JCM 14929 / IAM 14863 / T), this protein is Large ribosomal subunit protein bL20.